Reading from the N-terminus, the 423-residue chain is Inactive autotransporter heptosyltransferase BimC (423 aa).

The segment covering 1–10 (MPKVTFSGSA) has biased composition (polar residues). The tract at residues 1–49 (MPKVTFSGSAPTLGVHAPPALDPRQPASPPPAASNGTHARGFSPPADMP) is disordered. The Fe(3+) site is built by cysteine 371, cysteine 374, cysteine 390, and cysteine 402.

This sequence belongs to the glycosyltransferase 9 family. Homotrimer or homotetramer. Requires Fe(3+) as cofactor.

Its subcellular location is the cell inner membrane. The protein resides in the cytoplasm. In terms of biological role, iron-binding protein which is required for the asymmetric polar distribution of the autotransporter BimA on the bacterial surface prior to its translocation into bacterial periplasm. Lacks heptosyltransferase activity. This is Inactive autotransporter heptosyltransferase BimC from Burkholderia thailandensis (strain ATCC 700388 / DSM 13276 / CCUG 48851 / CIP 106301 / E264).